A 342-amino-acid polypeptide reads, in one-letter code: Heat-inducible transcription repressor HrcA (342 aa).

It belongs to the HrcA family.

Its function is as follows. Negative regulator of class I heat shock genes (grpE-dnaK-dnaJ and groELS operons). Prevents heat-shock induction of these operons. The chain is Heat-inducible transcription repressor HrcA from Oceanobacillus iheyensis (strain DSM 14371 / CIP 107618 / JCM 11309 / KCTC 3954 / HTE831).